Here is a 402-residue protein sequence, read N- to C-terminus: Phosphoglycerate kinase (402 aa).

Substrate contacts are provided by residues 24 to 26, R40, 63 to 66, R122, and R155; these read DFN and HFGR. ATP is bound by residues K206, G297, E328, and 358–361; that span reads GGDS.

Belongs to the phosphoglycerate kinase family. As to quaternary structure, monomer.

Its subcellular location is the cytoplasm. The catalysed reaction is (2R)-3-phosphoglycerate + ATP = (2R)-3-phospho-glyceroyl phosphate + ADP. Its pathway is carbohydrate degradation; glycolysis; pyruvate from D-glyceraldehyde 3-phosphate: step 2/5. The chain is Phosphoglycerate kinase from Prochlorococcus marinus (strain MIT 9312).